Consider the following 386-residue polypeptide: Nucleosome assembly protein 1-like 4 (386 aa).

Residues 1–29 are disordered; the sequence is MADNSFSDGVPSDSLEAAKNASNTEKLTD. N-acetylalanine is present on Ala-2. Ser-5, Ser-7, and Ser-12 each carry phosphoserine. Residues 20-29 are compositionally biased toward polar residues; the sequence is NASNTEKLTD. Ser-49 bears the Phosphoserine mark. Thr-51 carries the phosphothreonine modification. A phosphoserine mark is found at Ser-53 and Ser-54. Thr-58 carries the phosphothreonine modification. Residue Lys-105 is modified to N6-acetyllysine. Ser-125 carries the phosphoserine modification. Lys-146 carries the post-translational modification N6-acetyllysine. The short motif at 265–271 is the Nuclear localization signal element; sequence IKKKQKH. Ser-304 carries the phosphoserine modification. A compositionally biased stretch (acidic residues) spans 339–370; it reads AIEDDDNFEEGEEGEEEELEGDEEAEDDDDAE. A disordered region spans residues 339 to 386; it reads AIEDDDNFEEGEEGEEEELEGDEEAEDDDDAEINPKKEPSQPSECKQQ.

This sequence belongs to the nucleosome assembly protein (NAP) family. In terms of assembly, interacts with core (H2A, H2B, H3, H4) and linker (H1) histones. In terms of processing, polyglutamylated and polyglycylated. These 2 modifications occur exclusively on glutamate residues and result in either polyglutamate or polyglycine chains on the gamma-carboxyl group. Both modifications can coexist on the same protein on adjacent residues, and lowering polyglycylation levels increases polyglutamylation, and reciprocally. Polyglutamylated by TTLL4. Phosphorylated at the G0/G1 boundary but it is not phosphorylated in S-phase. Phosphorylated protein remains in the cytoplasm in a complex with histones during the G0/G1 transition, whereas dephosphorylation triggers its transport into the nucleus at the G1/S-boundary.

The protein resides in the nucleus. Its subcellular location is the cytoplasm. Functionally, acts as a histone chaperone in nucleosome assembly. The sequence is that of Nucleosome assembly protein 1-like 4 (NAP1L4) from Bos taurus (Bovine).